The chain runs to 297 residues: ATP synthase F(1) complex subunit gamma, mitochondrial (297 aa).

Residues 1–25 (MFSRAGVAGLSAWTLQPQWIQVRNM) constitute a mitochondrion transit peptide. Residue Lys-39 is modified to N6-acetyllysine. Lys-49 is modified (N6-succinyllysine). Residue Lys-55 is modified to N6-acetyllysine. Lys-115 is subject to N6-acetyllysine; alternate. The residue at position 115 (Lys-115) is an N6-succinyllysine; alternate. Ser-146 bears the Phosphoserine mark. Lys-154 is subject to N6-acetyllysine; alternate. Position 154 is an N6-succinyllysine; alternate (Lys-154). Lys-197 carries the N6-acetyllysine modification. At Lys-270 the chain carries N6-succinyllysine.

Belongs to the ATPase gamma chain family. Component of the ATP synthase complex composed at least of ATP5F1A/subunit alpha, ATP5F1B/subunit beta, ATP5MC1/subunit c (homooctomer), MT-ATP6/subunit a, MT-ATP8/subunit 8, ATP5ME/subunit e, ATP5MF/subunit f, ATP5MG/subunit g, ATP5MK/subunit k, ATP5MJ/subunit j, ATP5F1C/subunit gamma, ATP5F1D/subunit delta, ATP5F1E/subunit epsilon, ATP5PF/subunit F6, ATP5PB/subunit b, ATP5PD/subunit d, ATP5PO/subunit OSCP. ATP synthase complex consists of a soluble F(1) head domain (subunits alpha(3) and beta(3)) - the catalytic core - and a membrane F(0) domain - the membrane proton channel (subunits c, a, 8, e, f, g, k and j). These two domains are linked by a central stalk (subunits gamma, delta, and epsilon) rotating inside the F1 region and a stationary peripheral stalk (subunits F6, b, d, and OSCP). Interacts with FLVCR2; this interaction occurs in the absence of heme and is disrupted upon heme binding.

The protein localises to the mitochondrion inner membrane. In terms of biological role, subunit gamma, of the mitochondrial membrane ATP synthase complex (F(1)F(0) ATP synthase or Complex V) that produces ATP from ADP in the presence of a proton gradient across the membrane which is generated by electron transport complexes of the respiratory chain. ATP synthase complex consist of a soluble F(1) head domain - the catalytic core - and a membrane F(1) domain - the membrane proton channel. These two domains are linked by a central stalk rotating inside the F(1) region and a stationary peripheral stalk. During catalysis, ATP synthesis in the catalytic domain of F(1) is coupled via a rotary mechanism of the central stalk subunits to proton translocation. In vivo, can only synthesize ATP although its ATP hydrolase activity can be activated artificially in vitro. With the central stalk subunit delta, is essential for the biogenesis of F(1) catalytic part of the ATP synthase complex namely in the formation of F1 assembly intermediate. In Pongo abelii (Sumatran orangutan), this protein is ATP synthase F(1) complex subunit gamma, mitochondrial.